A 193-amino-acid chain; its full sequence is Peptidyl-tRNA hydrolase (193 aa).

Y16 is a binding site for tRNA. The Proton acceptor role is filled by H21. F67, N69, and N115 together coordinate tRNA.

This sequence belongs to the PTH family. In terms of assembly, monomer.

The protein resides in the cytoplasm. The catalysed reaction is an N-acyl-L-alpha-aminoacyl-tRNA + H2O = an N-acyl-L-amino acid + a tRNA + H(+). Its function is as follows. Hydrolyzes ribosome-free peptidyl-tRNAs (with 1 or more amino acids incorporated), which drop off the ribosome during protein synthesis, or as a result of ribosome stalling. Functionally, catalyzes the release of premature peptidyl moieties from peptidyl-tRNA molecules trapped in stalled 50S ribosomal subunits, and thus maintains levels of free tRNAs and 50S ribosomes. In Baumannia cicadellinicola subsp. Homalodisca coagulata, this protein is Peptidyl-tRNA hydrolase.